Consider the following 1053-residue polypeptide: Translation initiation factor IF-2 (1053 aa).

Residues 1 to 20 are compositionally biased toward polar residues; that stretch reads MSESKNSGENTLSVTPTKTL. The tract at residues 1–442 is disordered; the sequence is MSESKNSGEN…TATGGEEEER (442 aa). 2 stretches are compositionally biased toward low complexity: residues 64–76 and 83–102; these read EAAP…ATVT and RPAA…AAVP. 2 stretches are compositionally biased toward pro residues: residues 131–141 and 150–161; these read PAQPKAEPVPA and APVPPVPAPSAP. Residues 178–220 show a composition bias toward low complexity; sequence PVSQAKPIQTAPVQTAPAAQASASQTTGPRPVAAGPRPATGAA. Residues 255 to 264 show a composition bias toward gly residues; that stretch reads GGRGGPGRGE. Composition is skewed to basic and acidic residues over residues 279-288 and 295-353; these read LTDEEREARA and RIRE…EAKR. A compositionally biased stretch (low complexity) spans 375–386; that stretch reads TATAAAPAAAAP. Positions 550–720 constitute a tr-type G domain; that stretch reads PRPPVVTIMG…ALQAELLDLK (171 aa). Residues 559–566 form a G1 region; the sequence is GHVDHGKT. 559–566 serves as a coordination point for GTP; that stretch reads GHVDHGKT. The tract at residues 584–588 is G2; it reads GITQH. The tract at residues 606 to 609 is G3; it reads DTPG. Residues 606 to 610 and 660 to 663 each bind GTP; these read DTPGH and NKID. A G4 region spans residues 660–663; that stretch reads NKID. A G5 region spans residues 696-698; sequence SAT.

It belongs to the TRAFAC class translation factor GTPase superfamily. Classic translation factor GTPase family. IF-2 subfamily.

It is found in the cytoplasm. Functionally, one of the essential components for the initiation of protein synthesis. Protects formylmethionyl-tRNA from spontaneous hydrolysis and promotes its binding to the 30S ribosomal subunits. Also involved in the hydrolysis of GTP during the formation of the 70S ribosomal complex. The polypeptide is Translation initiation factor IF-2 (Beijerinckia indica subsp. indica (strain ATCC 9039 / DSM 1715 / NCIMB 8712)).